The following is a 446-amino-acid chain: Divalent metal cation transporter MntH (446 aa).

11 consecutive transmembrane segments (helical) span residues 32–52, 59–79, 107–127, 139–159, 168–188, 210–230, 264–284, 303–323, 355–375, 381–401, and 420–440; these read FSFL…GNWI, AQFG…AMLL, AFVF…AEVI, IPLL…LFIM, AIVG…VFIA, GALF…NLYL, SIAF…FFGV, PLLG…ALLA, LITR…FNSN, QLLV…LIPL, and VNII…YLII.

It belongs to the NRAMP family.

It localises to the cell membrane. Functionally, h(+)-stimulated, divalent metal cation uptake system. This is Divalent metal cation transporter MntH from Staphylococcus saprophyticus subsp. saprophyticus (strain ATCC 15305 / DSM 20229 / NCIMB 8711 / NCTC 7292 / S-41).